The chain runs to 636 residues: DNA mismatch repair protein MutL (636 aa).

Over residues 332–344 (HAGEQGDSLRTDI) the composition is skewed to basic and acidic residues. 2 disordered regions span residues 332-360 (HAGEQGDSLRTDIADAPEQPGATATPADN) and 417-443 (ASAPADAAPAQASEPAAAPQADDSDDA). Over residues 417–437 (ASAPADAAPAQASEPAAAPQA) the composition is skewed to low complexity.

This sequence belongs to the DNA mismatch repair MutL/HexB family.

In terms of biological role, this protein is involved in the repair of mismatches in DNA. It is required for dam-dependent methyl-directed DNA mismatch repair. May act as a 'molecular matchmaker', a protein that promotes the formation of a stable complex between two or more DNA-binding proteins in an ATP-dependent manner without itself being part of a final effector complex. The chain is DNA mismatch repair protein MutL from Ralstonia nicotianae (strain ATCC BAA-1114 / GMI1000) (Ralstonia solanacearum).